The primary structure comprises 891 residues: Dynein axonemal intermediate chain 3 (891 aa).

Over residues 1–17 (MAPKQKKKTSRGKKRLK) the composition is skewed to basic residues. The segment at 1–22 (MAPKQKKKTSRGKKRLKPVLAA) is disordered. WD repeat units follow at residues 395-435 (ESPD…DRIE), 477-533 (GHKK…PLTP), 670-709 (IHDG…GPLL), and 713-753 (CAPK…HEPA). A coiled-coil region spans residues 818 to 861 (LEYVEQRKKIREQEKKEMELEMAKKKVKTYQKSKEQMQAELKMD).

Interacts with ACTR2; this interaction reduces binding of the Arp2/3 complex to the VCA domain of nucleation promoting factors. Part of the multisubunit axonemal dynein complex formed at least of two heavy chains and a number of intermediate and light chains. Found in a associated with the catalytic heavy chain DNAH2, the intermediate chain DNAI4, and the light chain DYNLT1.

It is found in the cytoplasm. Its function is as follows. Acts as a negative regulator of cell migration, invasion, and metastasis downstream of p53/TP53, through inhibition of Arp2/3 complex-mediated actin polymerization. Via its association with the multisubunit axonemal dynein complex, is potentially involved in the regulation of cilia function. May play a role in osteogenesis of dental tissue-derived mesenchymal stem cells. This Homo sapiens (Human) protein is Dynein axonemal intermediate chain 3.